The sequence spans 292 residues: NAD kinase (292 aa).

The active-site Proton acceptor is aspartate 73. Residues 73-74 (DG), 147-148 (NE), histidine 158, arginine 175, aspartate 177, 188-193 (TAYSLS), and glutamine 247 each bind NAD(+).

This sequence belongs to the NAD kinase family. A divalent metal cation is required as a cofactor.

The protein resides in the cytoplasm. It catalyses the reaction NAD(+) + ATP = ADP + NADP(+) + H(+). Its function is as follows. Involved in the regulation of the intracellular balance of NAD and NADP, and is a key enzyme in the biosynthesis of NADP. Catalyzes specifically the phosphorylation on 2'-hydroxyl of the adenosine moiety of NAD to yield NADP. The sequence is that of NAD kinase from Klebsiella pneumoniae subsp. pneumoniae (strain ATCC 700721 / MGH 78578).